The primary structure comprises 518 residues: Glutamate--cysteine ligase (518 aa).

This sequence belongs to the glutamate--cysteine ligase type 1 family. Type 1 subfamily.

It catalyses the reaction L-cysteine + L-glutamate + ATP = gamma-L-glutamyl-L-cysteine + ADP + phosphate + H(+). Its pathway is sulfur metabolism; glutathione biosynthesis; glutathione from L-cysteine and L-glutamate: step 1/2. This Klebsiella pneumoniae subsp. pneumoniae (strain ATCC 700721 / MGH 78578) protein is Glutamate--cysteine ligase.